The chain runs to 367 residues: Nociceptin receptor (367 aa).

Topologically, residues M1 to L45 are extracellular. N-linked (GlcNAc...) asparagine glycans are attached at residues N21, N26, and N36. Residues G46 to Y71 form a helical membrane-spanning segment. The Cytoplasmic segment spans residues V72 to N84. The chain crosses the membrane as a helical span at residues I85–T106. At D107–K121 the chain is on the extracellular side. C120 and C197 are joined by a disulfide. The helical transmembrane segment at T122 to V143 threads the bilayer. Residues D144–S162 lie on the Cytoplasmic side of the membrane. Residues K163–M185 traverse the membrane as a helical segment. The Extracellular portion of the chain corresponds to G186–W208. A helical transmembrane segment spans residues G209–S233. Topologically, residues L234–L261 are cytoplasmic. The chain crosses the membrane as a helical span at residues V262–V282. Residues Q283–I297 lie on the Extracellular side of the membrane. The chain crosses the membrane as a helical span at residues L298–L319. The Cytoplasmic segment spans residues D320–A367. The S-palmitoyl cysteine moiety is linked to residue C331.

It belongs to the G-protein coupled receptor 1 family. Post-translationally, phosphorylation at Ser-360 requires GRK3. In terms of tissue distribution, highly expressed in several brain areas, the intestine, liver and spleen. Detected in sympathetic stellate ganglion neurons.

Its subcellular location is the cell membrane. The protein resides in the cytoplasmic vesicle. G-protein coupled opioid receptor that functions as a receptor for the endogenous neuropeptide nociceptin. Ligand binding causes a conformation change that triggers signaling via guanine nucleotide-binding proteins (G proteins) and modulates the activity of down-stream effectors. Signaling via G proteins mediates inhibition of adenylate cyclase activity and calcium channel activity. Arrestins modulate signaling via G proteins and mediate the activation of alternative signaling pathways that lead to the activation of MAP kinases. Plays a role in modulating nociception and the perception of pain. Plays a role in the regulation of locomotor activity by the neuropeptide nociceptin. This is Nociceptin receptor (Oprl1) from Rattus norvegicus (Rat).